We begin with the raw amino-acid sequence, 270 residues long: Replication protein A 32 kDa subunit (270 aa).

Met-1 is subject to N-acetylmethionine. Phosphoserine; by PRKDC is present on residues Ser-4 and Ser-8. Residue Thr-21 is modified to Phosphothreonine; by PRKDC. Residues 21 to 41 are disordered; that stretch reads TQSPGGFGSPAPSQAEKKSRA. The residue at position 23 (Ser-23) is a Phosphoserine; by CDK2. Ser-29 is modified (phosphoserine; by CDK1). At Ser-33 the chain carries Phosphoserine; by PRKDC. Residues Lys-37 and Lys-38 each participate in a glycyl lysine isopeptide (Lys-Gly) (interchain with G-Cter in ubiquitin) cross-link. Positions 74-148 form a DNA-binding region, OB; it reads VTIVGIIRHA…KSLVAFKIMP (75 aa). Residues 187–270 form an interaction with RAD52, TIPIN, UNG and XPA region; it reads GMSEAGNFGG…DDHFKSTDAE (84 aa).

This sequence belongs to the replication factor A protein 2 family. In terms of assembly, component of the replication protein A complex (RPA/RP-A), a heterotrimeric complex composed of RPA1, RPA2 and RPA3. Interacts with PRPF19; the PRP19-CDC5L complex is recruited to the sites of DNA repair where it ubiquitinates the replication protein A complex (RPA). Interacts with SERTAD3. Interacts with TIPIN. Interacts with TIMELESS. Interacts with PPP4R2; the interaction is direct, DNA damage-dependent and mediates the recruitment of the PP4 catalytic subunit PPP4C. Interacts (hyperphosphorylated) with RAD51. Interacts with SMARCAL1; the interaction is direct and mediates the recruitment to the RPA complex of SMARCAL1. Interacts with RAD52 and XPA; those interactions are direct and associate RAD52 and XPA to the RPA complex. Interacts with FBH1. Interacts with ETAA1; the interaction is direct and promotes ETAA1 recruitment at stalled replication forks. Interacts with RFWD3. Interacts with DDI2. Interacts (in unphosphorylated form via N-terminus) with EIF4EBP3; the interaction enhances EIF4EBP3-mediated inhibition of EIF4E-mediated mRNA nuclear export. Interacts with BRIP1/FANCJ via the RPA1 subunit; following DNA damage they colocalize in foci in the nucleus. Interacts with nuclear UNG (isoform 2); this interaction mediates UNG recruitment to RPA-coated single-stranded DNA at stalled replication forks. Post-translationally, differentially phosphorylated throughout the cell cycle, becoming phosphorylated at the G1-S transition and dephosphorylated in late mitosis. Mainly phosphorylated at Ser-23 and Ser-29, by cyclin A-CDK2 and cyclin B-CDK1, respectively during DNA replication and mitosis. Dephosphorylation may require the serine/threonine-protein phosphatase 4. Phosphorylation at Ser-23 and Ser-29 is a prerequisite for further phosphorylation. Becomes hyperphosphorylated on additional residues including Ser-4, Ser-8, Thr-21 and Ser-33 in response to DNA damage. Hyperphosphorylation is mediated by ATM, ATR and PRKDC. Primarily recruited to DNA repair nuclear foci as a hypophosphorylated form it undergoes subsequent hyperphosphorylation, catalyzed by ATR. Hyperphosphorylation is required for RAD51 recruitment to chromatin and efficient DNA repair. Phosphorylation at Thr-21 depends upon RFWD3 presence. DNA damage-induced 'Lys-63'-linked polyubiquitination by PRPF19 mediates ATRIP recruitment to the RPA complex at sites of DNA damage and activation of ATR. Ubiquitinated by RFWD3 at stalled replication forks in response to DNA damage: ubiquitination by RFWD3 does not lead to degradation by the proteasome and promotes removal of the RPA complex from stalled replication forks, promoting homologous recombination.

The protein resides in the nucleus. Its subcellular location is the PML body. Functionally, as part of the heterotrimeric replication protein A complex (RPA/RP-A), binds and stabilizes single-stranded DNA intermediates that form during DNA replication or upon DNA stress. It prevents their reannealing and in parallel, recruits and activates different proteins and complexes involved in DNA metabolism. Thereby, it plays an essential role both in DNA replication and the cellular response to DNA damage. In the cellular response to DNA damage, the RPA complex controls DNA repair and DNA damage checkpoint activation. Through recruitment of ATRIP activates the ATR kinase a master regulator of the DNA damage response. It is required for the recruitment of the DNA double-strand break repair factors RAD51 and RAD52 to chromatin in response to DNA damage. Also recruits to sites of DNA damage proteins like XPA and XPG that are involved in nucleotide excision repair and is required for this mechanism of DNA repair. Also plays a role in base excision repair (BER) probably through interaction with UNG. Also recruits SMARCAL1/HARP, which is involved in replication fork restart, to sites of DNA damage. May also play a role in telomere maintenance. RPA stimulates 5'-3' helicase activity of BRIP1/FANCJ. This chain is Replication protein A 32 kDa subunit (RPA2), found in Homo sapiens (Human).